Consider the following 110-residue polypeptide: Snake venom vascular endothelial growth factor toxin (110 aa).

Residue Q1 is modified to Pyrrolidone carboxylic acid. Intrachain disulfides connect C14–C56, C45–C91, and C49–C93.

It belongs to the PDGF/VEGF growth factor family. Snake venom VEGF subfamily. As to quaternary structure, homodimer; disulfide-linked. In terms of tissue distribution, expressed by the venom gland.

The protein resides in the secreted. Snake venom VEGFs that may contribute to venom dispersion and prey subjugation by inducing vascular permeability and hypotension. This protein potently stimulates dermal human microvascular endothelial cell (dHMVEC) proliferation in a VEGFR-2 dependent manner. This stimulatory effect is correlated with activation of the MAPK Erk1/2 signaling pathway. It also appears to be a chemoattractant for migration of these cells and stimulates their radial migration in a collagen gel. In vivo, it induces angiogenesis in a Japanese quail assay. This pro-angiogenic effect may also be related to its interaction with VEGFR-2. In addition, it may induce an increase in capillary permeability after intradermal injection, as well as a drastic hypotensive effect after intravenous injection. The hypotension is mediated by nitric oxide (NO), which is produced by VEGF-activated endothelium NO synthase. In Daboia palaestinae (Palestine viper), this protein is Snake venom vascular endothelial growth factor toxin.